We begin with the raw amino-acid sequence, 185 residues long: Ribosome-recycling factor (185 aa).

Belongs to the RRF family.

It is found in the cytoplasm. Its function is as follows. Responsible for the release of ribosomes from messenger RNA at the termination of protein biosynthesis. May increase the efficiency of translation by recycling ribosomes from one round of translation to another. This Clostridium novyi (strain NT) protein is Ribosome-recycling factor.